Consider the following 165-residue polypeptide: Small ribosomal subunit protein uS5 (165 aa).

Residues 13 to 76 (LEEKVLVVNR…EAAKKNLMKI (64 aa)) form the S5 DRBM domain.

Belongs to the universal ribosomal protein uS5 family. As to quaternary structure, part of the 30S ribosomal subunit. Contacts proteins S4 and S8.

In terms of biological role, with S4 and S12 plays an important role in translational accuracy. Located at the back of the 30S subunit body where it stabilizes the conformation of the head with respect to the body. This Chlamydia pneumoniae (Chlamydophila pneumoniae) protein is Small ribosomal subunit protein uS5.